A 141-amino-acid polypeptide reads, in one-letter code: Nucleoside diphosphate kinase (141 aa).

Positions 11, 59, 87, 93, 104, and 114 each coordinate ATP. The active-site Pros-phosphohistidine intermediate is histidine 117.

Belongs to the NDK family. Homotetramer. It depends on Mg(2+) as a cofactor.

The protein localises to the cytoplasm. The enzyme catalyses a 2'-deoxyribonucleoside 5'-diphosphate + ATP = a 2'-deoxyribonucleoside 5'-triphosphate + ADP. It carries out the reaction a ribonucleoside 5'-diphosphate + ATP = a ribonucleoside 5'-triphosphate + ADP. Its function is as follows. Major role in the synthesis of nucleoside triphosphates other than ATP. The ATP gamma phosphate is transferred to the NDP beta phosphate via a ping-pong mechanism, using a phosphorylated active-site intermediate. This is Nucleoside diphosphate kinase from Vibrio vulnificus (strain CMCP6).